The chain runs to 540 residues: Alanine aminotransferase 2, mitochondrial (540 aa).

The transit peptide at Met1 to Phe46 directs the protein to the mitochondrion. Residues Gly11–Pro40 are disordered. The span at Leu28–Pro40 shows a compositional bias: low complexity. The residue at position 357 (Lys357) is an N6-(pyridoxal phosphate)lysine.

The protein belongs to the class-I pyridoxal-phosphate-dependent aminotransferase family. Alanine aminotransferase subfamily. Homodimer. The cofactor is pyridoxal 5'-phosphate. Post-translationally, the N-terminus is blocked. Expressed in shoots, essentially in leaves and flowers, mostly in vascular tissues. Also detected in stems and roots.

The protein resides in the mitochondrion. It catalyses the reaction L-alanine + 2-oxoglutarate = pyruvate + L-glutamate. Its pathway is photosynthesis; C4 acid pathway. It participates in amino-acid degradation; L-alanine degradation via transaminase pathway; pyruvate from L-alanine: step 1/1. This Arabidopsis thaliana (Mouse-ear cress) protein is Alanine aminotransferase 2, mitochondrial (ALAAT2).